Consider the following 537-residue polypeptide: Beta-hexosaminidase subunit beta (537 aa).

An N-terminal signal peptide occupies residues 1-23; sequence MPGSPRRAPGLLLQALVAMVSLA. The N-linked (GlcNAc...) asparagine glycan is linked to asparagine 62. The cysteines at positions 69 and 115 are disulfide-linked. 2 N-linked (GlcNAc...) asparagine glycosylation sites follow: asparagine 168 and asparagine 305. 2 disulfide bridges follow: cysteine 287/cysteine 338 and cysteine 512/cysteine 529. Catalysis depends on glutamate 333, which acts as the Proton donor.

It belongs to the glycosyl hydrolase 20 family. There are 3 forms of beta-hexosaminidase: hexosaminidase A is a heterodimer composed of one subunit alpha and one subunit beta (chain A and B); hexosaminidase B is a homodimer of two beta subunits (two chains A and B); hexosaminidase S is a homodimer of two alpha subunits. The composition of the dimer (isozyme A versus isozyme S) has a significant effect on the substrate specificity of the alpha subunit active site.

The protein resides in the lysosome. It is found in the cytoplasmic vesicle. Its subcellular location is the secretory vesicle. It localises to the cortical granule. It catalyses the reaction Hydrolysis of terminal non-reducing N-acetyl-D-hexosamine residues in N-acetyl-beta-D-hexosaminides.. It carries out the reaction N-acetyl-beta-D-galactosaminyl-(1-&gt;4)-beta-D-3-sulfogalactosyl-(1-&gt;4)-beta-D-glucosyl-(1&lt;-&gt;1')-ceramide + H2O = a beta-D-3-sulfogalactosyl-(1-&gt;4)-beta-D-glucosyl-(1&lt;-&gt;1')-ceramide + N-acetyl-beta-D-galactosamine. The catalysed reaction is a ganglioside GM2 (d18:1(4E)) + H2O = a ganglioside GM3 (d18:1(4E)) + N-acetyl-beta-D-galactosamine. The enzyme catalyses a ganglioside GM2 + H2O = a ganglioside GM3 + N-acetyl-beta-D-galactosamine. It catalyses the reaction beta-D-GalNAc-(1-&gt;4)-alpha-L-IdoA-(1-&gt;3)-beta-D-GalNAc-4-sulfate-(1-&gt;4)-alpha-L-IdoA-(1-&gt;3)-D-GalNAc-4-sulfate + H2O = alpha-L-IdoA-(1-&gt;3)-beta-D-GalNAc-4-sulfate-(1-&gt;4)-alpha-L-IdoA-(1-&gt;3)-D-GalNAc-4-sulfate + N-acetyl-D-galactosamine. It carries out the reaction N-acetyl-beta-D-6-sulfogalactosaminyl-(1-&gt;4)-alpha-L-iduronyl-(1-&gt;3)-N-acetyl-D-6-sulfogalactosamine + H2O = alpha-L-iduronyl-(1-&gt;3)-N-acetyl-D-6-sulfogalactosamine + N-acetyl-D-6-sulfogalactosamine. Addition of GM2A stimulates the hydrolysis of sulfated glycosphingolipid SM2 and the ganglioside GM2. In terms of biological role, hydrolyzes the non-reducing end N-acetyl-D-hexosamine and/or sulfated N-acetyl-D-hexosamine of glycoconjugates, such as the oligosaccharide moieties from proteins and neutral glycolipids, or from certain mucopolysaccharides. The isozyme B does not hydrolyze each of these substrates, however hydrolyzes efficiently neutral oligosaccharide. Only the isozyme A is responsible for the degradation of GM2 gangliosides in the presence of GM2A. During fertilization is responsible, at least in part, for the zona block to polyspermy. Present in the cortical granules of non-activated oocytes, is exocytosed during the cortical reaction in response to oocyte activation and inactivates the sperm galactosyltransferase-binding site, accounting for the block in sperm binding to the zona pellucida. This chain is Beta-hexosaminidase subunit beta, found in Rattus norvegicus (Rat).